The chain runs to 172 residues: Ribosome maturation factor RimM (172 aa).

Residues 96–168 (EGEFYYHEII…RVDVEIPEGL (73 aa)) enclose the PRC barrel domain.

The protein belongs to the RimM family. As to quaternary structure, binds ribosomal protein uS19.

The protein resides in the cytoplasm. Its function is as follows. An accessory protein needed during the final step in the assembly of 30S ribosomal subunit, possibly for assembly of the head region. Essential for efficient processing of 16S rRNA. May be needed both before and after RbfA during the maturation of 16S rRNA. It has affinity for free ribosomal 30S subunits but not for 70S ribosomes. The polypeptide is Ribosome maturation factor RimM (Streptococcus gordonii (strain Challis / ATCC 35105 / BCRC 15272 / CH1 / DL1 / V288)).